A 189-amino-acid chain; its full sequence is UPF0301 protein A1C_00165 (189 aa).

Belongs to the UPF0301 (AlgH) family.

In Rickettsia akari (strain Hartford), this protein is UPF0301 protein A1C_00165.